Consider the following 43-residue polypeptide: Potassium channel toxin gamma-KTx 4.3 (43 aa).

4 disulfide bridges follow: Cys-5–Cys-23, Cys-11–Cys-34, Cys-20–Cys-39, and Cys-24–Cys-41.

The protein belongs to the ergtoxin family. Gamma-KTx 4 subfamily. Expressed by the venom gland.

It localises to the secreted. Its function is as follows. Reversibly blocks Kv11/ERG potassium channels. This chain is Potassium channel toxin gamma-KTx 4.3, found in Centruroides exilicauda (Bark scorpion).